A 31-amino-acid chain; its full sequence is Gamma-conotoxin-like As7a (31 aa).

3 disulfides stabilise this stretch: Cys-2-Cys-16, Cys-9-Cys-20, and Cys-15-Cys-31. A 4-carboxyglutamate modification is found at Glu-14.

The protein belongs to the conotoxin O1 superfamily. As to expression, expressed by the venom duct.

The protein resides in the secreted. Gamma-conotoxins may act on voltage-gated non-specific cation pacemaker channels (HCN). Elicits toxic effects in the freshwater snail Pomacea paludosa after intramuscular injection, but it has no effect when injected intracerebrally into mice. The polypeptide is Gamma-conotoxin-like As7a (Conus cancellatus (Cancellate cone)).